The primary structure comprises 334 residues: N,N'-diacetyllegionaminic acid synthase (334 aa).

Positions 282–334 (SLVAKKDIKKGEIFSEGNLTTKRPANGISAMRYEEFLGKIATKNYKEDELIRE) constitute an AFP-like domain.

It carries out the reaction 2,4-diacetamido-2,4,6-trideoxy-alpha-D-mannopyranose + phosphoenolpyruvate + H2O = N,N-diacetyllegionaminate + phosphate. Functionally, involved in biosynthesis of legionaminic acid (5,7-diamino-3,5,7,9-tetradeoxy-D-glycero-D-galacto-non-2-ulosonic acid)(Leg), a sialic acid-like derivative that is incorporated into flagellin via O-linkage to Ser/Thr. Catalyzes the condensation of 2,4-diacetamido-2,4,6-trideoxymannose with phosphoenolpyruvate (PEP) to give N,N'-diacetyllegionaminic acid. In Campylobacter jejuni subsp. jejuni serotype O:2 (strain ATCC 700819 / NCTC 11168), this protein is N,N'-diacetyllegionaminic acid synthase (legI).